The primary structure comprises 88 residues: Small ribosomal subunit protein uS15 (88 aa).

The protein belongs to the universal ribosomal protein uS15 family. Part of the 30S ribosomal subunit. Forms a bridge to the 50S subunit in the 70S ribosome, contacting the 23S rRNA.

One of the primary rRNA binding proteins, it binds directly to 16S rRNA where it helps nucleate assembly of the platform of the 30S subunit by binding and bridging several RNA helices of the 16S rRNA. In terms of biological role, forms an intersubunit bridge (bridge B4) with the 23S rRNA of the 50S subunit in the ribosome. The polypeptide is Small ribosomal subunit protein uS15 (Pelobacter propionicus (strain DSM 2379 / NBRC 103807 / OttBd1)).